The following is a 132-amino-acid chain: ATP synthase epsilon chain (132 aa).

The protein belongs to the ATPase epsilon chain family. In terms of assembly, F-type ATPases have 2 components, CF(1) - the catalytic core - and CF(0) - the membrane proton channel. CF(1) has five subunits: alpha(3), beta(3), gamma(1), delta(1), epsilon(1). CF(0) has three main subunits: a, b and c.

It is found in the cell inner membrane. Functionally, produces ATP from ADP in the presence of a proton gradient across the membrane. The protein is ATP synthase epsilon chain of Jannaschia sp. (strain CCS1).